The following is a 671-amino-acid chain: Transcriptional regulator Kaiso (671 aa).

Residues 1 to 103 (MESRKLISAT…RADLLDELIK (103 aa)) are interaction with NCOR1. Residues 1 to 136 (MESRKLISAT…SGTEQDGTAE (136 aa)) are self-association. Positions 32–94 (CDVTVIVEDR…IYSSKVVRVR (63 aa)) constitute a BTB domain. Over residues 127 to 144 (SGTEQDGTAETLPSSSSD) the composition is skewed to polar residues. The segment at 127–161 (SGTEQDGTAETLPSSSSDKSLDMEKSKDEAQDNGA) is disordered. Over residues 145 to 156 (KSLDMEKSKDEA) the composition is skewed to basic and acidic residues. Glycyl lysine isopeptide (Lys-Gly) (interchain with G-Cter in SUMO2) cross-links involve residues Lys-151 and Lys-153. Thr-251 is subject to Phosphothreonine. Residues 298–571 (LPNHMSSSVN…FMSSHIKSVH (274 aa)) form an interaction with CBFA2T3 region. The disordered stretch occupies residues 332–365 (IIDDDDDIISSSPDSAVSNTSLVPQADNSKSTTL). A compositionally biased stretch (polar residues) spans 347-365 (AVSNTSLVPQADNSKSTTL). Glycyl lysine isopeptide (Lys-Gly) (interchain with G-Cter in SUMO2) cross-links involve residues Lys-388, Lys-405, Lys-412, and Lys-447. Residues 451-461 (DGGEAKLDNEL) are compositionally biased toward basic and acidic residues. The segment at 451 to 474 (DGGEAKLDNELPKTSGSEPPNKRM) is disordered. The interaction with CTNND1 stretch occupies residues 452–671 (GGEAKLDNEL…EFEFIIPESY (220 aa)). Glycyl lysine isopeptide (Lys-Gly) (interchain with G-Cter in SUMO2) cross-links involve residues Lys-463, Lys-472, and Lys-477. Positions 469–478 (PPNKRMKVKH) match the Nuclear localization signal motif. 3 consecutive C2H2-type zinc fingers follow at residues 492–514 (YICI…FNIH), 520–542 (YQCR…EIHH), and 548–571 (YQCL…KSVH). Residues 512-637 (NIHSWEKKYQ…TSTPPQNKST (126 aa)) are required for DNA-binding. Residues Lys-537, Lys-568, Lys-580, Lys-609, and Lys-616 each participate in a glycyl lysine isopeptide (Lys-Gly) (interchain with G-Cter in SUMO2) cross-link.

In terms of assembly, interacts with NCOR1. Self-associates. Interacts with CTNND1, and this interaction inhibits binding to both methylated and non-methylated DNA. Interacts with CTNND2. Interacts with KPNA2/RCH1, which may mediate nuclear import of this protein. Interacts with CBFA2T3. In terms of tissue distribution, expressed in brain, heart, kidney, liver, lung, neuromuscular junctions, skeletal muscle, spleen and testis.

The protein resides in the nucleus. Functionally, transcriptional regulator with bimodal DNA-binding specificity. Binds to methylated CpG dinucleotides in the consensus sequence 5'-CGCG-3' and also binds to the non-methylated consensus sequence 5'-CTGCNA-3' also known as the consensus kaiso binding site (KBS). May recruit the N-CoR repressor complex to promote histone deacetylation and the formation of repressive chromatin structures in target gene promoters. Contributes to the repression of target genes of the Wnt signaling pathway. May also activate transcription of a subset of target genes by the recruitment of CTNND2. Represses expression of MMP7 in conjunction with transcriptional corepressors CBFA2T3, CBFA2T2 and RUNX1T1. The sequence is that of Transcriptional regulator Kaiso (Zbtb33) from Mus musculus (Mouse).